Here is a 441-residue protein sequence, read N- to C-terminus: Inositol hexakisphosphate kinase 1 (441 aa).

Residues 100–175 (ETVEQDDTTE…MLDGNSGLSS (76 aa)) are disordered. The span at 113-123 (PRRKHSRRSLH) shows a compositional bias: basic residues. Positions 137–149 (SLSLETSESSQEA) are enriched in low complexity. The span at 150 to 160 (KSPKVELHSHS) shows a compositional bias: basic and acidic residues. Serine 151 bears the Phosphoserine mark. 220 to 228 (PCVLDLKMG) serves as a coordination point for substrate. The segment at 370 to 392 (SSCGPSTSPSNTSPEAGPSSQPK) is disordered. Residues 372-391 (CGPSTSPSNTSPEAGPSSQP) are compositionally biased toward polar residues.

Belongs to the inositol phosphokinase (IPK) family.

It localises to the cytoplasm. It is found in the nucleus. It carries out the reaction 1D-myo-inositol hexakisphosphate + ATP = 5-diphospho-1D-myo-inositol 1,2,3,4,6-pentakisphosphate + ADP. It catalyses the reaction 1-diphospho-1D-myo-inositol 2,3,4,5,6-pentakisphosphate + ATP + H(+) = 1,5-bis(diphospho)-1D-myo-inositol 2,3,4,6-tetrakisphosphate + ADP. In terms of biological role, converts inositol hexakisphosphate (InsP6) to diphosphoinositol pentakisphosphate (InsP7/PP-InsP5). Converts 1,3,4,5,6-pentakisphosphate (InsP5) to PP-InsP4. The polypeptide is Inositol hexakisphosphate kinase 1 (IP6K1) (Homo sapiens (Human)).